The sequence spans 823 residues: Axial budding pattern protein 2 (823 aa).

Positions 1 to 22 (MTQLQISLLLTATISLLHLVVA) are cleaved as a signal peptide. Residues 23–508 (TPYEAYPIGK…SHNKKAVAIA (486 aa)) are Extracellular-facing. N-linked (GlcNAc...) asparagine glycans are attached at residues Asn41, Asn50, Asn96, Asn117, Asn163, Asn260, Asn266, Asn304, Asn324, Asn359, Asn382, Asn389, Asn403, Asn447, Asn451, and Asn495. The segment at 447–467 (NHSANATSTRSSHHSTSTSSY) is disordered. Low complexity predominate over residues 449-467 (SANATSTRSSHHSTSTSSY). Residues 509–529 (CGVAIPLGVILVALICFLIFW) traverse the membrane as a helical segment. At 530 to 823 (RRRRENPDDE…DIHGRIPEML (294 aa)) the chain is on the cytoplasmic side. 2 disordered regions span residues 539-576 (ENLP…ASSY) and 596-627 (HSAT…QSQS). 2 stretches are compositionally biased toward polar residues: residues 552-566 (NPAN…TPLN) and 614-626 (SGMN…FQSQ). Residues Ser642, Ser673, and Ser676 each carry the phosphoserine modification. Disordered stretches follow at residues 700-734 (PEKE…VTPS) and 751-771 (DSQS…SSDD). Residues 709-724 (DVTMSSLDPWNSNISP) are compositionally biased toward polar residues. The segment covering 760–769 (TPTTMSTSSS) has biased composition (low complexity).

In terms of assembly, interacts with BEM1, BUD3, BUD4, BUD5, CDC24 and CDC42. Post-translationally, O-glycosylated by PMT4 and N-glycosylated. O-glycosylation increases activity in daughter cells by enhancing stability and promoting localization to the plasma membrane. May also be O-glycosylated by PMT1 and PMT2.

The protein resides in the cell membrane. Its function is as follows. Required for haploid cells axial budding pattern. Acts as an anchor to help direct new growth components and/or polarity establishment components like the BUD5 GTP/GDP exchange factor to localize at the cortical axial budding site. Regulates septin organization in late G1 independently of its role in polarity-axis determination. This Saccharomyces cerevisiae (strain ATCC 204508 / S288c) (Baker's yeast) protein is Axial budding pattern protein 2 (AXL2).